The following is a 576-amino-acid chain: Citrinin biosynthesis transcriptional activator ctnR (576 aa).

The disordered stretch occupies residues 1–27; that stretch reads MLSHEMASTAHRQPSRPTTRQRQRTGR. The zn(2)-C6 fungal-type DNA-binding region spans 29-56; it reads CEECRRRKLRCDGQQPRCGVCVDSGVTC. The segment at 102-148 is disordered; the sequence is STPLTNDHHDGCSVSSASSRSDSNPPPTVSEPDMSLPNTTTSVSSAP. Residues 114–124 are compositionally biased toward low complexity; sequence SVSSASSRSDS. Residues 137–148 are compositionally biased toward polar residues; the sequence is LPNTTTSVSSAP.

It localises to the nucleus. Transcription factor that regulates the expression of the gene cluster that mediates the biosynthesis of the mycotoxin citrinin, a hepato-nephrotoxic compound to humans due to inhibition of respiration complex III. The chain is Citrinin biosynthesis transcriptional activator ctnR from Monascus purpureus (Red mold).